Reading from the N-terminus, the 301-residue chain is Protoheme IX farnesyltransferase (301 aa).

The next 9 membrane-spanning stretches (helical) occupy residues Phe20–Leu42, Val55–Phe75, Ala105–Trp125, Gln126–Ala146, Leu150–Val172, Phe176–Ile198, Met227–Val247, Val249–Met269, and Phe280–Phe300.

Belongs to the UbiA prenyltransferase family. Protoheme IX farnesyltransferase subfamily. Interacts with CtaA.

It localises to the cell membrane. It catalyses the reaction heme b + (2E,6E)-farnesyl diphosphate + H2O = Fe(II)-heme o + diphosphate. It functions in the pathway porphyrin-containing compound metabolism; heme O biosynthesis; heme O from protoheme: step 1/1. Functionally, converts heme B (protoheme IX) to heme O by substitution of the vinyl group on carbon 2 of heme B porphyrin ring with a hydroxyethyl farnesyl side group. The chain is Protoheme IX farnesyltransferase from Listeria monocytogenes serotype 4b (strain CLIP80459).